The sequence spans 539 residues: Chaperonin GroEL (539 aa).

ATP contacts are provided by residues 29 to 32 (TLGP), 86 to 90 (DGTTT), Gly-413, 476 to 478 (NAA), and Asp-492.

Belongs to the chaperonin (HSP60) family. Forms a cylinder of 14 subunits composed of two heptameric rings stacked back-to-back. Interacts with the co-chaperonin GroES.

It localises to the cytoplasm. The catalysed reaction is ATP + H2O + a folded polypeptide = ADP + phosphate + an unfolded polypeptide.. Together with its co-chaperonin GroES, plays an essential role in assisting protein folding. The GroEL-GroES system forms a nano-cage that allows encapsulation of the non-native substrate proteins and provides a physical environment optimized to promote and accelerate protein folding. In Streptococcus thermophilus (strain CNRZ 1066), this protein is Chaperonin GroEL.